A 260-amino-acid chain; its full sequence is Probable carbohydrate esterase At4g34215 (260 aa).

Residues 1 to 22 (MEGGSITPGEDKPEIQSPIPPN) are disordered. Residues Ser31, Asp235, and His238 contribute to the active site.

Belongs to the carbohydrate esterase 6 family.

This Arabidopsis thaliana (Mouse-ear cress) protein is Probable carbohydrate esterase At4g34215.